Reading from the N-terminus, the 312-residue chain is UPF0725 protein At3g19520 (312 aa).

This sequence belongs to the UPF0725 (EMB2204) family.

The protein is UPF0725 protein At3g19520 of Arabidopsis thaliana (Mouse-ear cress).